A 586-amino-acid polypeptide reads, in one-letter code: MTMPLPNKTTGVTFLHQIQSSELETLTRPPLKISLERPLGEMYVENNRTGIFNYPEGTTYDFAAAAAPVYSSASLSYAASSETFGSSSLTGLHTLNNVPPSPVVFLAKLPQLSPFIHHHGQQVPYYLESEQGTFAVREAAPPTFYRSSSDNRRQSGRERMSSANDKGPPSMESTKETRYCAVCSDYASGYHYGVWSCEGCKAFFKRSIQGHNDYMCPATNQCTIDKNRRKSCQACRLRKCYEVGMMKGGIRKDRRGGRLLKHKRQKEEQEQKNDVDPSEIRTASIWVNPSVKSMKLSPVLSLTAEQLISALMEAEAPIVYSEHDSTKPLSEASMMTLLTNLADRELVHMINWAKRVPGFVDLTLHDQVHLLECAWLEILMVGLIWRSVEHPGKLSFAPNLLLDRNQGRCVEGLVEIFDMLVTTATRFRMMRLRGEEFICLKSIILLNSGVYTFLSSTLESLEDTDLIHIILDKIIDTLVHFMAKSGLSLQQQQRRLAQLLLILSHIRHMSNKGMEHLYSMKCKNVVPLYDLLLEMLDAHRIHTPKDKTTTQEEDSRSPPTTTVNGASPCLQPYYTNTEEVSLQSTV.

Residues 1 to 179 (MTMPLPNKTT…SMESTKETRY (179 aa)) form a modulating region. The tract at residues 144–173 (FYRSSSDNRRQSGRERMSSANDKGPPSMES) is disordered. Over residues 149-160 (SDNRRQSGRERM) the composition is skewed to basic and acidic residues. 2 consecutive NR C4-type zinc fingers follow at residues 180-200 (CAVC…CEGC) and 216-240 (CPAT…LRKC). The segment at residues 180 to 245 (CAVCSDYASG…RLRKCYEVGM (66 aa)) is a DNA-binding region (nuclear receptor). The interval 246–302 (MKGGIRKDRRGGRLLKHKRQKEEQEQKNDVDPSEIRTASIWVNPSVKSMKLSPVLSL) is hinge. Positions 252-264 (KDRRGGRLLKHKR) are enriched in basic residues. Residues 252–276 (KDRRGGRLLKHKRQKEEQEQKNDVD) form a disordered region. Over residues 265–276 (QKEEQEQKNDVD) the composition is skewed to basic and acidic residues. The 237-residue stretch at 303 to 539 (TAEQLISALM…DLLLEMLDAH (237 aa)) folds into the NR LBD domain. Residues 543 to 556 (TPKDKTTTQEEDSR) are compositionally biased toward basic and acidic residues. Positions 543–569 (TPKDKTTTQEEDSRSPPTTTVNGASPC) are disordered.

This sequence belongs to the nuclear hormone receptor family. NR3 subfamily. Binds DNA as a homodimer. Can form a heterodimer with ER-beta.

The protein localises to the nucleus. The steroid hormones and their receptors are involved in the regulation of eukaryotic gene expression and affect cellular proliferation and differentiation in target tissues. This is Estrogen receptor (esr1) from Xenopus laevis (African clawed frog).